A 1342-amino-acid chain; its full sequence is DNA-directed RNA polymerase subunit beta (1342 aa).

The protein belongs to the RNA polymerase beta chain family. As to quaternary structure, the RNAP catalytic core consists of 2 alpha, 1 beta, 1 beta' and 1 omega subunit. When a sigma factor is associated with the core the holoenzyme is formed, which can initiate transcription.

It carries out the reaction RNA(n) + a ribonucleoside 5'-triphosphate = RNA(n+1) + diphosphate. Its function is as follows. DNA-dependent RNA polymerase catalyzes the transcription of DNA into RNA using the four ribonucleoside triphosphates as substrates. This chain is DNA-directed RNA polymerase subunit beta, found in Shewanella amazonensis (strain ATCC BAA-1098 / SB2B).